Here is a 132-residue protein sequence, read N- to C-terminus: Probable histone H2A.2 (132 aa).

Belongs to the histone H2A family. In terms of assembly, the nucleosome is a histone octamer containing two molecules each of H2A, H2B, H3 and H4 assembled in one H3-H4 heterotetramer and two H2A-H2B heterodimers. The octamer wraps approximately 147 bp of DNA. Not ubiquitinated. In terms of tissue distribution, expressed mainly in non-dividing tissues of the plant. Also found in meristems and dividing cells.

Its subcellular location is the nucleus. It localises to the chromosome. Its function is as follows. Core component of nucleosome. Nucleosomes wrap and compact DNA into chromatin, limiting DNA accessibility to the cellular machineries which require DNA as a template. Histones thereby play a central role in transcription regulation, DNA repair, DNA replication and chromosomal stability. DNA accessibility is regulated via a complex set of post-translational modifications of histones, also called histone code, and nucleosome remodeling. This chain is Probable histone H2A.2, found in Arabidopsis thaliana (Mouse-ear cress).